A 274-amino-acid chain; its full sequence is Large ribosomal subunit protein uL2 (274 aa).

2 disordered regions span residues 28–54 (APHAPLLEKKSKTGGRNNNGRITTRHI) and 224–274 (VAMN…RRRK). The segment covering 263 to 274 (KRTDKMIVRRRK) has biased composition (basic and acidic residues).

Belongs to the universal ribosomal protein uL2 family. Part of the 50S ribosomal subunit. Forms a bridge to the 30S subunit in the 70S ribosome.

Functionally, one of the primary rRNA binding proteins. Required for association of the 30S and 50S subunits to form the 70S ribosome, for tRNA binding and peptide bond formation. It has been suggested to have peptidyltransferase activity; this is somewhat controversial. Makes several contacts with the 16S rRNA in the 70S ribosome. The protein is Large ribosomal subunit protein uL2 of Pseudomonas fluorescens (strain SBW25).